Here is a 139-residue protein sequence, read N- to C-terminus: S-adenosylmethionine decarboxylase proenzyme (139 aa).

The active-site Schiff-base intermediate with substrate; via pyruvic acid is the serine 63. Serine 63 carries the pyruvic acid (Ser); by autocatalysis modification. Histidine 68 (proton acceptor; for processing activity) is an active-site residue. The Proton donor; for catalytic activity role is filled by cysteine 83.

The protein belongs to the prokaryotic AdoMetDC family. Type 1 subfamily. In terms of assembly, heterotetramer of two alpha and two beta chains arranged as a dimer of alpha/beta heterodimers. Pyruvate is required as a cofactor. In terms of processing, is synthesized initially as an inactive proenzyme. Formation of the active enzyme involves a self-maturation process in which the active site pyruvoyl group is generated from an internal serine residue via an autocatalytic post-translational modification. Two non-identical subunits are generated from the proenzyme in this reaction, and the pyruvate is formed at the N-terminus of the alpha chain, which is derived from the carboxyl end of the proenzyme. The post-translation cleavage follows an unusual pathway, termed non-hydrolytic serinolysis, in which the side chain hydroxyl group of the serine supplies its oxygen atom to form the C-terminus of the beta chain, while the remainder of the serine residue undergoes an oxidative deamination to produce ammonia and the pyruvoyl group blocking the N-terminus of the alpha chain.

The catalysed reaction is S-adenosyl-L-methionine + H(+) = S-adenosyl 3-(methylsulfanyl)propylamine + CO2. It functions in the pathway amine and polyamine biosynthesis; S-adenosylmethioninamine biosynthesis; S-adenosylmethioninamine from S-adenosyl-L-methionine: step 1/1. Its function is as follows. Catalyzes the decarboxylation of S-adenosylmethionine to S-adenosylmethioninamine (dcAdoMet), the propylamine donor required for the synthesis of the polyamines spermine and spermidine from the diamine putrescine. The protein is S-adenosylmethionine decarboxylase proenzyme of Pyrococcus furiosus (strain ATCC 43587 / DSM 3638 / JCM 8422 / Vc1).